A 104-amino-acid chain; its full sequence is Flagellar hook-basal body complex protein FliE (104 aa).

The protein belongs to the FliE family.

The protein localises to the bacterial flagellum basal body. This Serratia proteamaculans (strain 568) protein is Flagellar hook-basal body complex protein FliE.